Reading from the N-terminus, the 1647-residue chain is Probable ubiquitin fusion degradation protein C12B10.01c (1647 aa).

Positions 192 to 209 (TYSDSSNYHTSTDSSQYN) are enriched in polar residues. Disordered stretches follow at residues 192–288 (TYSD…PSAA) and 1039–1076 (ESMSGSSRNSSGDYTDSMSQDAPNHTTEPSERRDSSTS). Acidic residues-rich tracts occupy residues 218-228 (DTNDGTDDDIN) and 245-273 (ERDEDVDEEEEEDDDENNDEGDDEDENEN). Over residues 1039–1050 (ESMSGSSRNSSG) the composition is skewed to low complexity. Polar residues predominate over residues 1051-1065 (DYTDSMSQDAPNHTT). The segment covering 1066 to 1076 (EPSERRDSSTS) has biased composition (basic and acidic residues). Residues 1183–1257 (IENILTDFSN…SVSFLLSRNP (75 aa)) are K-box. In terms of domain architecture, HECT spans 1294–1647 (ATYAASENIL…LEGQGSFHLS (354 aa)). Catalysis depends on Cys-1614, which acts as the Glycyl thioester intermediate.

The protein belongs to the UPL family. K-HECT subfamily.

It carries out the reaction S-ubiquitinyl-[E2 ubiquitin-conjugating enzyme]-L-cysteine + [acceptor protein]-L-lysine = [E2 ubiquitin-conjugating enzyme]-L-cysteine + N(6)-ubiquitinyl-[acceptor protein]-L-lysine.. In terms of biological role, E3 ubiquitin-protein ligase which accepts ubiquitin from an E2 ubiquitin-conjugating enzyme in the form of a thioester and then directly transfers the ubiquitin to targeted substrates. This chain is Probable ubiquitin fusion degradation protein C12B10.01c, found in Schizosaccharomyces pombe (strain 972 / ATCC 24843) (Fission yeast).